Reading from the N-terminus, the 159-residue chain is Endoribonuclease YbeY (159 aa).

Residues H126, H130, and H136 each coordinate Zn(2+).

Belongs to the endoribonuclease YbeY family. Requires Zn(2+) as cofactor.

It is found in the cytoplasm. Its function is as follows. Single strand-specific metallo-endoribonuclease involved in late-stage 70S ribosome quality control and in maturation of the 3' terminus of the 16S rRNA. The sequence is that of Endoribonuclease YbeY from Thermodesulfovibrio yellowstonii (strain ATCC 51303 / DSM 11347 / YP87).